The primary structure comprises 255 residues: 1-acyl-sn-glycerol-3-phosphate acyltransferase (255 aa).

An HXXXXD motif motif is present at residues 78-83 (HVSWLD).

This sequence belongs to the 1-acyl-sn-glycerol-3-phosphate acyltransferase family.

The protein localises to the cell inner membrane. It catalyses the reaction a 1-acyl-sn-glycero-3-phosphate + an acyl-CoA = a 1,2-diacyl-sn-glycero-3-phosphate + CoA. It participates in phospholipid metabolism; CDP-diacylglycerol biosynthesis; CDP-diacylglycerol from sn-glycerol 3-phosphate: step 2/3. Converts lysophosphatidic acid (LPA) into phosphatidic acid by incorporating acyl moiety at the 2 position. In Neisseria meningitidis serogroup B (strain ATCC BAA-335 / MC58), this protein is 1-acyl-sn-glycerol-3-phosphate acyltransferase (plsC).